The chain runs to 238 residues: Uridylate kinase (238 aa).

ATP is bound at residue 12–15 (KLSG). Glycine 54 contacts UMP. Positions 55 and 59 each coordinate ATP. UMP contacts are provided by residues aspartate 74 and 135 to 142 (TGNPFFTT). Residues threonine 162, tyrosine 168, and aspartate 171 each contribute to the ATP site.

It belongs to the UMP kinase family. As to quaternary structure, homohexamer.

The protein resides in the cytoplasm. It carries out the reaction UMP + ATP = UDP + ADP. It participates in pyrimidine metabolism; CTP biosynthesis via de novo pathway; UDP from UMP (UMPK route): step 1/1. Inhibited by UTP. Functionally, catalyzes the reversible phosphorylation of UMP to UDP. The sequence is that of Uridylate kinase from Herminiimonas arsenicoxydans.